The chain runs to 166 residues: Phospholipase A2 inhibitor B1 (166 aa).

The N-terminal stretch at 1–19 is a signal peptide; that stretch reads MRLILLSGLLLLGTFLVNG. The 116-residue stretch at 46–161 folds into the C-type lectin domain; sequence LFHAFLTVHK…CDDNLLVVCE (116 aa). Cystine bridges form between cysteine 83–cysteine 160 and cysteine 138–cysteine 152. A glycan (N-linked (GlcNAc...) asparagine) is linked at asparagine 122.

The protein belongs to the alpha-type phospholipase A2 inhibitor family. Homotrimer; non-covalently linked. Expressed by the liver.

The protein resides in the secreted. In terms of biological role, this phospholipase A2 inhibitor binds directly phospholipase A2 in the presence or absence of calcium. This Crotalus durissus terrificus (South American rattlesnake) protein is Phospholipase A2 inhibitor B1.